A 479-amino-acid chain; its full sequence is Adenylate kinase 8 (479 aa).

Adenylate kinase stretches follow at residues 58–258 (PRVV…TYVQ) and 269–471 (PKVL…SGII). 67-72 (ASGKTT) is an ATP binding site. An NMP 1 region spans residues 87–113 (TKENLLEREFSLLSLEAKKHYQVYKRV). Residues 140–143 (GIPE), Gln147, and Arg203 contribute to the AMP site. Positions 177-206 (GKRIDPVTGEIYHTTFDWPPELEIQNRLIQ) are LID 1. 278–283 (GCGKKL) lines the ATP pocket. The NMP 2 stretch occupies residues 298–327 (SCGQLLKEAMAAESSLGDLIEPFFEKRMTV). AMP-binding positions include 325–327 (MTV), 354–357 (GFPR), and Gln361. The segment at 391 to 424 (LRRTDPVTGERFHLMYKPPPTIEVQARLLQNPKD) is LID 2. Residue Arg392 coordinates ATP.

Belongs to the adenylate kinase family. In terms of assembly, interacts with CFAP45 and CFAP52; CFAP45 and AK8 dimerization may create a cavity at the interface of the dimer that can accommodate AMP.

It is found in the cytoplasm. Its subcellular location is the cytosol. The protein resides in the cytoskeleton. It localises to the cilium axoneme. The catalysed reaction is AMP + ATP = 2 ADP. It catalyses the reaction a 2'-deoxyribonucleoside 5'-diphosphate + ATP = a 2'-deoxyribonucleoside 5'-triphosphate + ADP. The enzyme catalyses a ribonucleoside 5'-diphosphate + ATP = a ribonucleoside 5'-triphosphate + ADP. Its function is as follows. Nucleoside monophosphate (NMP) kinase that catalyzes the reversible transfer of the terminal phosphate group between nucleoside triphosphates and monophosphates. Has highest activity toward AMP, and weaker activity toward dAMP, CMP and dCMP. Also displays broad nucleoside diphosphate kinase activity. The sequence is that of Adenylate kinase 8 (Ak8) from Rattus norvegicus (Rat).